Consider the following 432-residue polypeptide: Glutamyl-tRNA reductase (432 aa).

Substrate contacts are provided by residues 55-58 (TCNR), S114, 119-121 (ETQ), and Q125. C56 serves as the catalytic Nucleophile. 194–199 (GAGEMI) contributes to the NADP(+) binding site.

This sequence belongs to the glutamyl-tRNA reductase family. In terms of assembly, homodimer.

It catalyses the reaction (S)-4-amino-5-oxopentanoate + tRNA(Glu) + NADP(+) = L-glutamyl-tRNA(Glu) + NADPH + H(+). The protein operates within porphyrin-containing compound metabolism; protoporphyrin-IX biosynthesis; 5-aminolevulinate from L-glutamyl-tRNA(Glu): step 1/2. Its function is as follows. Catalyzes the NADPH-dependent reduction of glutamyl-tRNA(Glu) to glutamate 1-semialdehyde (GSA). This is Glutamyl-tRNA reductase from Burkholderia orbicola (strain MC0-3).